Consider the following 2144-residue polypeptide: Insulin-like receptor (2144 aa).

Residues 1–43 form the signal peptide; it reads MFNMPRGVTKSKSKRGKIKMENDMAAAATTTACTLGHICVLCR. N74 carries an N-linked (GlcNAc...) asparagine glycan. A compositionally biased stretch (basic residues) spans 174–199; the sequence is RRQHQQQHHHHYQHHHQQHHQQHHQR. The interval 174 to 200 is disordered; it reads RRQHQQQHHHHYQHHHQQHHQQHHQRQ. The N-linked (GlcNAc...) asparagine glycan is linked to N203. The interval 229–256 is disordered; sequence NYKQQQQLQHNQQLPRATPQQKQQEKDR. A compositionally biased stretch (low complexity) spans 232-242; sequence QQQQLQHNQQL. Residues N265, N356, N376, N406, N468, and N509 are each glycosylated (N-linked (GlcNAc...) asparagine). 8 cysteine pairs are disulfide-bonded: C531/C539, C535/C545, C546/C554, C550/C564, C567/C576, C580/C591, C597/C618, and C635/C638. The FU repeat unit spans residues 542–586; the sequence is EHTCCSQDCLGGCVIDKNGNESCISCRNVSFNNICMDSCPKGYYQ. N-linked (GlcNAc...) asparagine glycosylation is found at N561 and N569. N-linked (GlcNAc...) asparagine glycosylation is found at N751, N810, N824, N839, N864, N898, N946, N1053, N1147, N1218, and N1265. Fibronectin type-III domains follow at residues 825–927 and 928–1026; these read VTTK…TNPG and RPSK…EYDD. A disordered region spans residues 1053 to 1084; that stretch reads NGSSDKSDGAEGAALDSNAIPNGGATNPSRRR. The region spanning 1210–1305 is the Fibronectin type-III 3 domain; that stretch reads LKVDLEHANN…EVEHIKVEPP (96 aa). Residues 1311-1331 form a helical membrane-spanning segment; the sequence is VFFWLLGIGLAFLIVSLFGYV. Over 1332–2144 the chain is Cytoplasmic; the sequence is CYLHKRKVPS…PPNGFIGREA (813 aa). Positions 1351-1354 are chico-binding; the sequence is NPFY. Y1354 is modified (phosphotyrosine; by autocatalysis). The region spanning 1371–1659 is the Protein kinase domain; that stretch reads IIQLAPLGQG…LEPQCPNSQF (289 aa). Residues 1377–1385 and K1405 each bind ATP; that span reads LGQGSFGMV. D1519 acts as the Proton acceptor in catalysis. Phosphotyrosine; by autocatalysis occurs at positions 1545, 1549, and 1550. 4 disordered regions span residues 1690–1724, 1788–1871, 1886–1962, and 2020–2144; these read VPLD…DQPP, RGYE…KKTV, LFNH…ISDN, and ISHN…GREA. S1816 is subject to Phosphoserine. Low complexity-rich tracts occupy residues 1849 to 1860 and 1894 to 1916; these read STASAGSSNASS and SNAS…NLTS. Residues 2042-2062 are compositionally biased toward acidic residues; sequence SDEDNEQEEDDEDEDDDVDDE. The segment covering 2063–2073 has biased composition (basic and acidic residues); it reads HVEHIKMERMP. The segment covering 2084-2120 has biased composition (polar residues); sequence SKTQPPRSRSVSQTRKSPTNPNSGIGATGAGNRSNLL.

It belongs to the protein kinase superfamily. Tyr protein kinase family. Insulin receptor subfamily. Tetramer of 2 alpha and 2 beta chains linked by disulfide bonds. The alpha chains contribute to the formation of the ligand-binding domain, while the beta chains carry the kinase domain. Interacts (via C-terminal cytoplasmic region) with dock/dreadlocks (via SH2 and SH3 domains); when autophosphorylated. May interact (via beta subunit) with chico/IRS-1; this interaction may lead to tyrosine phosphorylation of the insulin receptor substrate chico. Interacts with Elp6; the interaction may stabilize Elp6. It depends on Mn(2+) as a cofactor. In terms of processing, the 280 kDa proreceptor is proteolytically processed to form a 120 kDa alpha subunit and a 170 kDa beta subunit. The beta subunit undergoes cell-specific cleavage to generate a 90 kDa beta subunit and a free 60 kDa C-terminal subunit. Both the 90 kDa and the 170 kDa beta subunits can assemble with the alpha subunits to form mature receptors. Autophosphorylated on tyrosine residues, including Tyr-1549 and Tyr-1550, in response to exogenous insulin. Tyr-1549 and Tyr-1550 are dephosphorylated by Ptp61F recruited by the dock/dreadlocks adapter protein. Post-translationally, phosphorylation of Tyr-1354 is required for Chico-binding.

It localises to the membrane. The protein localises to the cell projection. It is found in the axon. The protein resides in the growth cone membrane. It catalyses the reaction L-tyrosyl-[protein] + ATP = O-phospho-L-tyrosyl-[protein] + ADP + H(+). Activated in response to insulin. Autophosphorylation activates the kinase activity. Has a ligand-stimulated tyrosine-protein kinase activity. Binds 3 insulin-like peptide ligands. Regulates cell number and cell size during development by regulating cell growth and survival, affecting body size and organ size, including ovaries and imaginal disks. Plays a role in life-span determination. May be involved in regulation of other neuroendocrine signaling pathways. Involved in the development of the embryonic nervous system. Functions upstream of dock/dreadlocks for photoreceptor (R cell) axon guidance and targeting in the visual system. Involved in the acs mediated recovery of gut enterocytes following the cytoplasmic purge response to intestinal bacterial infection. The protein is Insulin-like receptor of Drosophila melanogaster (Fruit fly).